The following is a 178-amino-acid chain: Cytochrome c-type biogenesis protein CcmE (178 aa).

Topologically, residues 1 to 8 (MNPRRKKR) are cytoplasmic. The helical; Signal-anchor for type II membrane protein transmembrane segment at 9 to 29 (LAIVGSILIGIGVVSGLVLYA) threads the bilayer. The Periplasmic portion of the chain corresponds to 30 to 178 (LSQNIDLFFT…QLESKKTNSY (149 aa)). The heme site is built by His143 and Tyr147. Residues 154–178 (EAAGQKHDKATYSDKQLESKKTNSY) form a disordered region. Positions 157–178 (GQKHDKATYSDKQLESKKTNSY) are enriched in basic and acidic residues.

The protein belongs to the CcmE/CycJ family.

It is found in the cell inner membrane. In terms of biological role, heme chaperone required for the biogenesis of c-type cytochromes. Transiently binds heme delivered by CcmC and transfers the heme to apo-cytochromes in a process facilitated by CcmF and CcmH. This Colwellia psychrerythraea (strain 34H / ATCC BAA-681) (Vibrio psychroerythus) protein is Cytochrome c-type biogenesis protein CcmE.